The sequence spans 113 residues: Ribonuclease P protein component (113 aa).

Positions Met1–Thr10 are enriched in basic residues. The disordered stretch occupies residues Met1–Arg23.

Belongs to the RnpA family. Consists of a catalytic RNA component (M1 or rnpB) and a protein subunit.

The enzyme catalyses Endonucleolytic cleavage of RNA, removing 5'-extranucleotides from tRNA precursor.. In terms of biological role, RNaseP catalyzes the removal of the 5'-leader sequence from pre-tRNA to produce the mature 5'-terminus. It can also cleave other RNA substrates such as 4.5S RNA. The protein component plays an auxiliary but essential role in vivo by binding to the 5'-leader sequence and broadening the substrate specificity of the ribozyme. In Kocuria rhizophila (strain ATCC 9341 / DSM 348 / NBRC 103217 / DC2201), this protein is Ribonuclease P protein component.